The primary structure comprises 477 residues: Glycogen synthase (477 aa).

An ADP-alpha-D-glucose-binding site is contributed by Lys-15.

Belongs to the glycosyltransferase 1 family. Bacterial/plant glycogen synthase subfamily.

The enzyme catalyses [(1-&gt;4)-alpha-D-glucosyl](n) + ADP-alpha-D-glucose = [(1-&gt;4)-alpha-D-glucosyl](n+1) + ADP + H(+). It functions in the pathway glycan biosynthesis; glycogen biosynthesis. In terms of biological role, synthesizes alpha-1,4-glucan chains using ADP-glucose. The chain is Glycogen synthase from Streptococcus pneumoniae (strain JJA).